The following is a 340-amino-acid chain: MKVSIVGITGYSGLELVRILNGHQKVELVSVHATKEIGTKLSDIYSYLKGICDLEIQSFDSQKIMATADLVFFATPSGVAKELAKDFIAADFPVIDISGDHRLPAAIYEKWYKKAAAEQASLDKFTYALAELTDVKGKKFIANPGCYATATELALLPLVKEKLIDVNSIIVDAKSGLTGAGKVLSESSHFVNVHDNYVTYKLNRHQHIPEIVQELKRFDNNLEHIQFSTSLLPVNRGIMATCYVTLKKPLSNEAVSKIYQDLYADKPFVRLQQDLPELHNVIGSNFCDIGFAYNPVTNVLTVISVIDNLVKGAAGQAVQNLNLMMGWDETEGFPMTPSYL.

The active site involves C146.

It belongs to the NAGSA dehydrogenase family. Type 1 subfamily.

It is found in the cytoplasm. It carries out the reaction N-acetyl-L-glutamate 5-semialdehyde + phosphate + NADP(+) = N-acetyl-L-glutamyl 5-phosphate + NADPH + H(+). Its pathway is amino-acid biosynthesis; L-arginine biosynthesis; N(2)-acetyl-L-ornithine from L-glutamate: step 3/4. Functionally, catalyzes the NADPH-dependent reduction of N-acetyl-5-glutamyl phosphate to yield N-acetyl-L-glutamate 5-semialdehyde. The sequence is that of N-acetyl-gamma-glutamyl-phosphate reductase from Streptococcus mutans serotype c (strain ATCC 700610 / UA159).